The following is a 222-amino-acid chain: Cytochrome b6 (222 aa).

A helical transmembrane segment spans residues 39 to 59; it reads IFYCLGGITLVCFIIQFATGF. Residue C42 participates in heme c binding. Residues H93 and H107 each contribute to the heme b site. The next 3 membrane-spanning stretches (helical) occupy residues 97 to 117, 123 to 143, and 193 to 213; these read ASMM…TGGF, LTWI…VTGY, and LHTF…FLMI. Residues H194 and H209 each coordinate heme b.

The protein belongs to the cytochrome b family. PetB subfamily. In terms of assembly, the 4 large subunits of the cytochrome b6-f complex are cytochrome b6, subunit IV (17 kDa polypeptide, PetD), cytochrome f and the Rieske protein, while the 4 small subunits are PetG, PetL, PetM and PetN. The complex functions as a dimer. The cofactor is heme b. It depends on heme c as a cofactor.

It is found in the cellular thylakoid membrane. In terms of biological role, component of the cytochrome b6-f complex, which mediates electron transfer between photosystem II (PSII) and photosystem I (PSI), cyclic electron flow around PSI, and state transitions. In Prochlorothrix hollandica, this protein is Cytochrome b6.